The chain runs to 347 residues: GTPase Obg (347 aa).

One can recognise an Obg domain in the interval 1–159; the sequence is MQFLDQAKIY…AWVWLRLKLL (159 aa). A disordered region spans residues 124–144; the sequence is GRGNASYKSSTNRAPRQHGPG. The region spanning 160–327 is the OBG-type G domain; sequence ADVGLVGLPN…ILDQLITMTG (168 aa). GTP-binding positions include 166-173, 191-195, 212-215, 279-282, and 308-310; these read GLPNAGKS, FTTLH, DIPG, NKID, and SGA. Serine 173 and threonine 193 together coordinate Mg(2+).

The protein belongs to the TRAFAC class OBG-HflX-like GTPase superfamily. OBG GTPase family. As to quaternary structure, monomer. Requires Mg(2+) as cofactor.

The protein resides in the cytoplasm. In terms of biological role, an essential GTPase which binds GTP, GDP and possibly (p)ppGpp with moderate affinity, with high nucleotide exchange rates and a fairly low GTP hydrolysis rate. Plays a role in control of the cell cycle, stress response, ribosome biogenesis and in those bacteria that undergo differentiation, in morphogenesis control. The sequence is that of GTPase Obg from Zymomonas mobilis subsp. mobilis (strain ATCC 31821 / ZM4 / CP4).